Here is a 687-residue protein sequence, read N- to C-terminus: Putative pentatricopeptide repeat-containing protein At3g15930 (687 aa).

13 PPR repeats span residues 98 to 132 (DVVV…GVTP), 133 to 168 (DSHT…GLGS), 169 to 199 (NLYV…RCKE), 200 to 234 (DVFS…LVSP), 235 to 269 (TSVT…KTEP), 270 to 304 (SLRL…DVIS), 305 to 331 (WTSI…MPVR), 332 to 366 (DRIS…GMIP), 367 to 401 (DEFT…KIKN), 402 to 432 (DVVV…MDQR), 433 to 467 (DKFT…SIQP), 468 to 498 (DDIT…MRSD), and 504 to 534 (SLVH…MPMN). A type E motif region spans residues 539-614 (VWGALLGASR…TPGFSLIEVN (76 aa)). Positions 615-645 (GFAHEFVAGDKSHLQSEEIYMKLEELAQEST) are type E(+) motif.

This sequence belongs to the PPR family. PCMP-E subfamily.

This chain is Putative pentatricopeptide repeat-containing protein At3g15930 (PCMP-E51), found in Arabidopsis thaliana (Mouse-ear cress).